The following is a 607-amino-acid chain: Elongation factor 4 (607 aa).

Residues 11–193 form the tr-type G domain; that stretch reads EKIRNFSIIA…QIVEKVPAPT (183 aa). GTP-binding positions include 23 to 28 and 140 to 143; these read DHGKST and NKID.

Belongs to the TRAFAC class translation factor GTPase superfamily. Classic translation factor GTPase family. LepA subfamily.

It localises to the cell membrane. It carries out the reaction GTP + H2O = GDP + phosphate + H(+). Required for accurate and efficient protein synthesis under certain stress conditions. May act as a fidelity factor of the translation reaction, by catalyzing a one-codon backward translocation of tRNAs on improperly translocated ribosomes. Back-translocation proceeds from a post-translocation (POST) complex to a pre-translocation (PRE) complex, thus giving elongation factor G a second chance to translocate the tRNAs correctly. Binds to ribosomes in a GTP-dependent manner. This is Elongation factor 4 from Streptococcus pneumoniae (strain Hungary19A-6).